A 581-amino-acid polypeptide reads, in one-letter code: uncharacterized protein (581 aa).

This is an uncharacterized protein from Acanthamoeba polyphaga mimivirus (APMV).